The chain runs to 425 residues: Dihydroorotase (425 aa).

H59 and H61 together coordinate Zn(2+). Substrate is bound by residues 61–63 (HLR) and N93. 3 residues coordinate Zn(2+): D151, H178, and H231. Residue N277 coordinates substrate. D304 lines the Zn(2+) pocket. Residue D304 is part of the active site. Residues H308 and 322-323 (FG) each bind substrate.

The protein belongs to the metallo-dependent hydrolases superfamily. DHOase family. Class I DHOase subfamily. Zn(2+) is required as a cofactor.

It carries out the reaction (S)-dihydroorotate + H2O = N-carbamoyl-L-aspartate + H(+). Its pathway is pyrimidine metabolism; UMP biosynthesis via de novo pathway; (S)-dihydroorotate from bicarbonate: step 3/3. Functionally, catalyzes the reversible cyclization of carbamoyl aspartate to dihydroorotate. The sequence is that of Dihydroorotase from Staphylococcus epidermidis (strain ATCC 12228 / FDA PCI 1200).